Consider the following 228-residue polypeptide: Prolactin-2B1 (228 aa).

The signal sequence occupies residues 1-31 (MLLSLTQMLSSRASSRLFLVSYLLLWENVVS). Disulfide bonds link C89–C194 and C203–C228.

It belongs to the somatotropin/prolactin family. As to expression, expressed specifically in placenta. Expressed at high levels in trophoblast cells from both junctional and labyrinth zones of the chorioallantoic placenta the last week of gestation.

Its subcellular location is the secreted. The chain is Prolactin-2B1 (Prl2b1) from Mus musculus (Mouse).